Consider the following 585-residue polypeptide: Neopullulanase 2 (585 aa).

Ca(2+) contacts are provided by asparagine 143, aspartate 145, asparagine 148, aspartate 149, glycine 169, and aspartate 171. 2 residues coordinate substrate: histidine 244 and arginine 323. Catalysis depends on aspartate 325, which acts as the Nucleophile. Glutamate 354 (proton donor) is an active-site residue. Residues 420-421, aspartate 465, and arginine 469 contribute to the substrate site; that span reads HD.

This sequence belongs to the glycosyl hydrolase 13 family. As to quaternary structure, monomer. Ca(2+) serves as cofactor.

The catalysed reaction is Hydrolysis of pullulan to panose (6-alpha-D-glucosylmaltose).. Hydrolyzes pullulan efficiently but only a small amount of starch. Endohydrolysis of 1,4-alpha-glucosidic linkages in pullulan to form panose. Also cleaves (1-6)-alpha-glucosidic linkages to form maltotriose. The chain is Neopullulanase 2 (tvaII) from Thermoactinomyces vulgaris.